Here is an 83-residue protein sequence, read N- to C-terminus: Translational regulator CsrA (83 aa).

It belongs to the CsrA/RsmA family. In terms of assembly, homodimer; the beta-strands of each monomer intercalate to form a hydrophobic core, while the alpha-helices form wings that extend away from the core.

The protein resides in the cytoplasm. Functionally, a translational regulator that binds mRNA to regulate translation initiation and/or mRNA stability. Usually binds in the 5'-UTR at or near the Shine-Dalgarno sequence preventing ribosome-binding, thus repressing translation. Its main target seems to be the major flagellin gene, while its function is anatagonized by FliW. This chain is Translational regulator CsrA, found in Thermotoga maritima (strain ATCC 43589 / DSM 3109 / JCM 10099 / NBRC 100826 / MSB8).